A 218-amino-acid polypeptide reads, in one-letter code: Octanoyltransferase (218 aa).

Residues 32–214 (ALTPDEIWLV…HFTQLLGYND (183 aa)) form the BPL/LPL catalytic domain. Substrate contacts are provided by residues 71 to 78 (RGGQITYH), 143 to 145 (SLG), and 156 to 158 (GLA). Residue C174 is the Acyl-thioester intermediate of the active site.

Belongs to the LipB family.

The protein localises to the cytoplasm. The catalysed reaction is octanoyl-[ACP] + L-lysyl-[protein] = N(6)-octanoyl-L-lysyl-[protein] + holo-[ACP] + H(+). The protein operates within protein modification; protein lipoylation via endogenous pathway; protein N(6)-(lipoyl)lysine from octanoyl-[acyl-carrier-protein]: step 1/2. Functionally, catalyzes the transfer of endogenously produced octanoic acid from octanoyl-acyl-carrier-protein onto the lipoyl domains of lipoate-dependent enzymes. Lipoyl-ACP can also act as a substrate although octanoyl-ACP is likely to be the physiological substrate. This chain is Octanoyltransferase, found in Histophilus somni (strain 129Pt) (Haemophilus somnus).